Reading from the N-terminus, the 252-residue chain is Coenzyme F420:L-glutamate ligase (252 aa).

Residues 11–14 (MPLV), 45–46 (ET), and K50 each bind GTP. Position 115 (D115) interacts with a divalent metal cation. N118 lines the GTP pocket. Positions 156, 157, and 214 each coordinate a divalent metal cation. A GTP-binding site is contributed by 212–219 (MGQADEGV).

The protein belongs to the CofE family. In terms of assembly, homodimer. Mg(2+) serves as cofactor. The cofactor is Mn(2+). It depends on K(+) as a cofactor.

It carries out the reaction oxidized coenzyme F420-0 + GTP + L-glutamate = oxidized coenzyme F420-1 + GDP + phosphate + H(+). It catalyses the reaction oxidized coenzyme F420-1 + GTP + L-glutamate = oxidized coenzyme F420-2 + GDP + phosphate + H(+). Its pathway is cofactor biosynthesis; coenzyme F420 biosynthesis. Functionally, catalyzes the GTP-dependent successive addition of two or more gamma-linked L-glutamates to the L-lactyl phosphodiester of 7,8-didemethyl-8-hydroxy-5-deazariboflavin (F420-0) to form coenzyme F420-0-glutamyl-glutamate (F420-2) or polyglutamated F420 derivatives. This Methanothermobacter thermautotrophicus (strain ATCC 29096 / DSM 1053 / JCM 10044 / NBRC 100330 / Delta H) (Methanobacterium thermoautotrophicum) protein is Coenzyme F420:L-glutamate ligase.